The following is a 304-amino-acid chain: Ribosomal RNA small subunit methyltransferase H (304 aa).

S-adenosyl-L-methionine contacts are provided by residues 47-49, Asp-66, Phe-93, Asp-108, and Gln-115; that span reads GGH.

It belongs to the methyltransferase superfamily. RsmH family.

It is found in the cytoplasm. It catalyses the reaction cytidine(1402) in 16S rRNA + S-adenosyl-L-methionine = N(4)-methylcytidine(1402) in 16S rRNA + S-adenosyl-L-homocysteine + H(+). Functionally, specifically methylates the N4 position of cytidine in position 1402 (C1402) of 16S rRNA. The protein is Ribosomal RNA small subunit methyltransferase H of Prochlorococcus marinus (strain NATL2A).